We begin with the raw amino-acid sequence, 768 residues long: Telomere repeats-binding bouquet formation protein 1 (768 aa).

ARM repeat units lie at residues 101–145 (ELFQ…REVG) and 341–384 (NGLP…GQNS). Positions 399–448 (ETLREHWKAAKEILCRIKQFEKGGKEEKQQNRSGHYKDNTPSMKVNIQTN) form a coiled coil. 2 stretches are compositionally biased toward basic and acidic residues: residues 422-436 (GKEE…HYKD) and 461-475 (RAED…ELRS). Disordered regions lie at residues 422 to 441 (GKEE…TPSM) and 454 to 475 (ADST…ELRS). The tract at residues 524-700 (QNLDKEKTFD…EAMERRSPVP (177 aa)) is interaction with TERF1. T648 bears the Phosphothreonine mark. Residues 707–760 (KKRRIRKDFTKEEVNYLFHGVKTMGNHWNSILWSFPFQKGRRAVDLAHKYHRLI) enclose the Myb-like domain.

This sequence belongs to the TERB1 family. In terms of assembly, component of the MAJIN-TERB1-TERB2 complex, composed of MAJIN, TERB1 and TERB2. Interacts with TERF1, STAG3 and SUN1. Interacts (via Myb-like domain) with the cohesin complex; probably mediated via interaction with STAG3. Phosphorylated by CDK. Phosphorylation by CDK takes place in late prophase when the cap exchange is prominent. is important for the stabilization of telomere attachment but dispenable for the cap exchange. As to expression, expressed in testis and fetal oocytes.

It is found in the chromosome. The protein resides in the telomere. It localises to the nucleus inner membrane. Functionally, meiosis-specific telomere-associated protein involved in meiotic telomere attachment to the nucleus inner membrane, a crucial step for homologous pairing and synapsis. Component of the MAJIN-TERB1-TERB2 complex, which promotes telomere cap exchange by mediating attachment of telomeric DNA to the inner nuclear membrane and replacement of the protective cap of telomeric chromosomes: in early meiosis, the MAJIN-TERB1-TERB2 complex associates with telomeric DNA and the shelterin/telosome complex. During prophase, the complex matures and promotes release of the shelterin/telosome complex from telomeric DNA. In the MAJIN-TERB1-TERB2 complex, TERB1 probably mediates association with the shelterin/telosome complex via interaction with TERF1, promoting priming telomeric DNA attachment'. Promotes telomere association with the nuclear envelope and deposition of the SUN-KASH/LINC complex. Also recruits cohesin to telomeres to develop structural rigidity. The chain is Telomere repeats-binding bouquet formation protein 1 from Mus musculus (Mouse).